The primary structure comprises 169 residues: Lipoprotein signal peptidase (169 aa).

3 helical membrane passes run 12–32 (WLWLVVVVLVLDFASKQWILG), 70–90 (WFFAGIAVAIVAVLLVMMYRS), and 102–122 (AFIIGGALGNLFDRLWHGFVV). Active-site residues include Asp-123 and Asp-141. A helical membrane pass occupies residues 137–157 (FNLADSFICVGAAMIVLEGFL).

It belongs to the peptidase A8 family.

Its subcellular location is the cell inner membrane. It catalyses the reaction Release of signal peptides from bacterial membrane prolipoproteins. Hydrolyzes -Xaa-Yaa-Zaa-|-(S,diacylglyceryl)Cys-, in which Xaa is hydrophobic (preferably Leu), and Yaa (Ala or Ser) and Zaa (Gly or Ala) have small, neutral side chains.. It functions in the pathway protein modification; lipoprotein biosynthesis (signal peptide cleavage). This protein specifically catalyzes the removal of signal peptides from prolipoproteins. This is Lipoprotein signal peptidase from Serratia proteamaculans (strain 568).